The primary structure comprises 143 residues: D-aminoacyl-tRNA deacylase (143 aa).

Residues 135–136 (GP) carry the Gly-cisPro motif, important for rejection of L-amino acids motif.

The protein belongs to the DTD family. As to quaternary structure, homodimer.

Its subcellular location is the cytoplasm. It catalyses the reaction glycyl-tRNA(Ala) + H2O = tRNA(Ala) + glycine + H(+). It carries out the reaction a D-aminoacyl-tRNA + H2O = a tRNA + a D-alpha-amino acid + H(+). Its function is as follows. An aminoacyl-tRNA editing enzyme that deacylates mischarged D-aminoacyl-tRNAs. Also deacylates mischarged glycyl-tRNA(Ala), protecting cells against glycine mischarging by AlaRS. Acts via tRNA-based rather than protein-based catalysis; rejects L-amino acids rather than detecting D-amino acids in the active site. By recycling D-aminoacyl-tRNA to D-amino acids and free tRNA molecules, this enzyme counteracts the toxicity associated with the formation of D-aminoacyl-tRNA entities in vivo and helps enforce protein L-homochirality. This Mycobacterium marinum (strain ATCC BAA-535 / M) protein is D-aminoacyl-tRNA deacylase.